Consider the following 276-residue polypeptide: Undecaprenyl-diphosphatase (276 aa).

5 helical membrane passes run 84–104 (YRLGWYVIIGTIPICILGLFF), 115–135 (LWVVVTALVVFSGVIALAEYV), 188–208 (FGFLLAIPAVFASGLFSLPDA), 222–242 (QLLVATLIAFVLGLTAVAWLL), and 250–270 (MYWFVGYRVLVGTGMLVLLAT).

The protein belongs to the UppP family.

The protein localises to the cell membrane. The enzyme catalyses di-trans,octa-cis-undecaprenyl diphosphate + H2O = di-trans,octa-cis-undecaprenyl phosphate + phosphate + H(+). Functionally, catalyzes the dephosphorylation of undecaprenyl diphosphate (UPP). Confers resistance to bacitracin. This Mycobacterium bovis (strain ATCC BAA-935 / AF2122/97) protein is Undecaprenyl-diphosphatase.